The sequence spans 203 residues: MKLRWFAFLMVLLAGCSSKKDYQNPPWNPEVPVKRAMQWMPISEKAGKAWGVSPRLITAIIAVESGGNPTLVSKSNAVGLMQLKASTAGREVYRYMGWKGQPSTSELKNPERNISMGTAYLSILEHGVLKGIDDPEVMQYALVVSYVNGAGALLRTFSSDRKEAIEEINGMDKNEFVDHVAKNHPAPQAPRYIWKVQKAMDAM.

An N-terminal signal peptide occupies residues 1–15; that stretch reads MKLRWFAFLMVLLAG. Cysteine 16 is lipidated: N-palmitoyl cysteine. Residue cysteine 16 is the site of S-diacylglycerol cysteine attachment.

The protein belongs to the transglycosylase Slt family.

The protein resides in the cell outer membrane. The catalysed reaction is Endolytic cleavage of the (1-&gt;4)-beta-glycosidic linkage between N-acetylmuramic acid (MurNAc) and N-acetylglucosamine (GlcNAc) residues in peptidoglycan with concomitant formation of a 1,6-anhydrobond in the MurNAc residue.. Its function is as follows. Murein-degrading enzyme. May play a role in recycling of muropeptides during cell elongation and/or cell division. Preferentially cleaves at a distance of more than two disaccharide units from the ends of the glycan chain. The polypeptide is Endo-type membrane-bound lytic murein transglycosylase A (Enterobacter sp. (strain 638)).